The sequence spans 430 residues: Asparagine--tRNA ligase (430 aa).

This sequence belongs to the class-II aminoacyl-tRNA synthetase family. Homodimer.

It is found in the cytoplasm. It catalyses the reaction tRNA(Asn) + L-asparagine + ATP = L-asparaginyl-tRNA(Asn) + AMP + diphosphate + H(+). The protein is Asparagine--tRNA ligase of Staphylococcus aureus (strain JH1).